Reading from the N-terminus, the 462-residue chain is MNTNIKTREYTTISEVSGPLMVVEGVEGVGYNEIVDIETPNGEKRSGQVLEVTDDVAVIQVFEGTTDLNTKNTKARFTGQTAKIGVSRDMMGRMFNGIGKPIDGGPEIIPDEELDINGSPMNPASREFPEEFIQTGISTIDGMNTLVRGQKLPIFSGSGLPHNELAAQIARQAKVLGDDAEFAVIFAAMGITHEEANFFMRDFERTGALEKVTVFMNLADDPAIERILTPKMALTTAEYFAFTLGMQVLVILTDMTNYCEALREISAARDEVPGRRGYPGYMYTDLANIYERAGRIDGKEGSITQMPILVMPQDDITHPIPDLTGYITEGQIVLSRELNRKGIYPPVDVLPSLSRLMSGGIGGDKTRDDHSGVSDQLYSAYAGGRELRDLVAVVGEEALTERDQKFLEFAEEFEGKFITQSKDEDRSIIETLDLGWDLLKILPKSELKRVKEEFIEQYLPKE.

The protein belongs to the ATPase alpha/beta chains family. Has multiple subunits with at least A(3), B(3), C, D, E, F, H, I and proteolipid K(x).

It is found in the cell membrane. In terms of biological role, component of the A-type ATP synthase that produces ATP from ADP in the presence of a proton gradient across the membrane. The B chain is a regulatory subunit. The chain is A-type ATP synthase subunit B from Methanobrevibacter smithii (strain ATCC 35061 / DSM 861 / OCM 144 / PS).